Consider the following 501-residue polypeptide: MEAASAALRRCLLLIVLVAAATLLPGAKALQCFCHLCTKDNFTCETDGLCFVSVTETTDKVIHNSMCIAEIDLIPRDRPFVCAPSSKTGAVTYCCNQDHCNKIELPTTGPFSEKQSAGLGPVELAAVIAGPVCFVCIALMLMVYICHNRTVIHHRVPNEEDPSLDRPFISEGTTLKDLIYDMTTSGSGSGLPLLVQRTIARTIVLQESIGKGRFGEVWRGKWRGEEVAVKIFSSREERSWFREAEIYQTVMLRHENILGFIAADNKDNGTWTQLWLVSDYHEHGSLFDYLNRYTVTVEGMIKLALSTASGLAHLHMEIVGTQGKPAIAHRDLKSKNILVKKNGTCCIADLGLAVRHDSATDTIDIAPNHRVGTKRYMAPEVLDDSINMKHFESFKRADIYAMGLVFWEIARRCSIGGIHEDYQLPYYDLVPSDPSVEEMRKVVCEQKLRPNIPNRWQSCEALRVMAKIMRECWYANGAARLTALRIKKTLSQLSQQEGIKM.

The signal sequence occupies residues 1–29; it reads MEAASAALRRCLLLIVLVAAATLLPGAKA. Over 30 to 124 the chain is Extracellular; that stretch reads LQCFCHLCTK…QSAGLGPVEL (95 aa). Cystine bridges form between Cys32/Cys50, Cys34/Cys37, Cys44/Cys67, Cys82/Cys94, and Cys95/Cys100. Asn41 is a glycosylation site (N-linked (GlcNAc...) asparagine). Residues 125–145 form a helical membrane-spanning segment; that stretch reads AAVIAGPVCFVCIALMLMVYI. Topologically, residues 146–501 are cytoplasmic; sequence CHNRTVIHHR…QLSQQEGIKM (356 aa). Ser163 carries the phosphoserine modification. Residues 173–202 enclose the GS domain; sequence TTLKDLIYDMTTSGSGSGLPLLVQRTIART. 2 positions are modified to phosphothreonine; by TGFBR2: Thr183 and Thr184. A phosphoserine; by TGFBR2 mark is found at Ser185, Ser187, and Ser189. An FKBP1A-binding motif is present at residues 191-192; that stretch reads LP. The Protein kinase domain occupies 203–493; it reads IVLQESIGKG…LRIKKTLSQL (291 aa). ATP is bound by residues 209–217 and Lys230; that span reads IGKGRFGEV. Catalysis depends on Asp331, which acts as the Proton acceptor. A Glycyl lysine isopeptide (Lys-Gly) (interchain with G-Cter in SUMO) cross-link involves residue Lys389.

It belongs to the protein kinase superfamily. TKL Ser/Thr protein kinase family. TGFB receptor subfamily. In terms of assembly, homodimer; in the endoplasmic reticulum but also at the cell membrane. Heterohexamer; TGFB1, TGFB2 and TGFB3 homodimeric ligands assemble a functional receptor composed of two TGFBR1 and TGFBR2 heterodimers to form a ligand-receptor heterohexamer. The respective affinity of TGBRB1 and TGFBR2 for the ligands may modulate the kinetics of assembly of the receptor and may explain the different biological activities of TGFB1, TGFB2 and TGFB3. Component of a complex composed of TSC22D1 (via N-terminus), TGFBR1 and TGFBR2; the interaction between TSC22D1 and TGFBR1 is inhibited by SMAD7 and promoted by TGFB1. Interacts with CD109; inhibits TGF-beta receptor activation in keratinocytes. Interacts with RBPMS. Interacts with SMAD2, SMAD3 and ZFYVE9; ZFYVE9 recruits SMAD2 and SMAD3 to the TGF-beta receptor. Interacts with TRAF6 and MAP3K7; induces MAP3K7 activation by TRAF6. Interacts with PARD6A; involved in TGF-beta induced epithelial to mesenchymal transition. Interacts with NEDD4L. Interacts with SMAD7, SMURF1 and SMURF2; SMAD7 recruits NEDD4L, SMURF1 and SMURF2 to the TGF-beta receptor. Interacts with USP15 and VPS39. Interacts (unphosphorylated) with FKBP1A; prevents TGFBR1 phosphorylation by TGFBR2 and stabilizes it in the inactive conformation. Interacts with SDCBP (via C-terminus). Interacts with CAV1 and this interaction is impaired in the presence of SDCBP. Interacts with APPL1; interaction is TGF beta dependent; mediates trafficking of the TGFBR1 from the endosomes to the nucleus via microtubules in a TRAF6-dependent manner. Interacts with GPR50; this interaction promotes the constitutive activation of SMAD signaling pathway. Mg(2+) serves as cofactor. It depends on Mn(2+) as a cofactor. Post-translationally, phosphorylated at basal levels in the absence of ligand. Activated upon phosphorylation by TGFBR2, mainly in the GS domain. Phosphorylation in the GS domain abrogates FKBP1A-binding. N-Glycosylated. In terms of processing, ubiquitinated; undergoes ubiquitination catalyzed by several E3 ubiquitin ligases including SMURF1, SMURF2 and NEDD4L2. Results in the proteasomal and/or lysosomal degradation of the receptor thereby negatively regulating its activity. Deubiquitinated by USP15, leading to stabilization of the protein and enhanced TGF-beta signal. Its ubiquitination and proteasome-mediated degradation is negatively regulated by SDCBP. In terms of tissue distribution, urogenital ridge, testis, ovary, brain and lungs.

It is found in the cell membrane. The protein localises to the cell junction. It localises to the tight junction. The protein resides in the membrane raft. Its subcellular location is the cell surface. It catalyses the reaction L-threonyl-[receptor-protein] + ATP = O-phospho-L-threonyl-[receptor-protein] + ADP + H(+). The catalysed reaction is L-seryl-[receptor-protein] + ATP = O-phospho-L-seryl-[receptor-protein] + ADP + H(+). With respect to regulation, kept in an inactive conformation by FKBP1A preventing receptor activation in absence of ligand. CD109 is another inhibitor of the receptor. Functionally, transmembrane serine/threonine kinase forming with the TGF-beta type II serine/threonine kinase receptor, TGFBR2, the non-promiscuous receptor for the TGF-beta cytokines TGFB1, TGFB2 and TGFB3. Transduces the TGFB1, TGFB2 and TGFB3 signal from the cell surface to the cytoplasm and is thus regulating a plethora of physiological and pathological processes including cell cycle arrest in epithelial and hematopoietic cells, control of mesenchymal cell proliferation and differentiation, wound healing, extracellular matrix production, immunosuppression and carcinogenesis. The formation of the receptor complex composed of 2 TGFBR1 and 2 TGFBR2 molecules symmetrically bound to the cytokine dimer results in the phosphorylation and the activation of TGFBR1 by the constitutively active TGFBR2. Activated TGFBR1 phosphorylates SMAD2 which dissociates from the receptor and interacts with SMAD4. The SMAD2-SMAD4 complex is subsequently translocated to the nucleus where it modulates the transcription of the TGF-beta-regulated genes. This constitutes the canonical SMAD-dependent TGF-beta signaling cascade. Also involved in non-canonical, SMAD-independent TGF-beta signaling pathways. For instance, TGFBR1 induces TRAF6 autoubiquitination which in turn results in MAP3K7 ubiquitination and activation to trigger apoptosis. Also regulates epithelial to mesenchymal transition through a SMAD-independent signaling pathway through PARD6A phosphorylation and activation. This chain is TGF-beta receptor type-1 (Tgfbr1), found in Rattus norvegicus (Rat).